We begin with the raw amino-acid sequence, 185 residues long: Ribosome-recycling factor (185 aa).

The protein belongs to the RRF family.

It localises to the cytoplasm. Functionally, responsible for the release of ribosomes from messenger RNA at the termination of protein biosynthesis. May increase the efficiency of translation by recycling ribosomes from one round of translation to another. This chain is Ribosome-recycling factor, found in Novosphingobium aromaticivorans (strain ATCC 700278 / DSM 12444 / CCUG 56034 / CIP 105152 / NBRC 16084 / F199).